The following is a 214-amino-acid chain: Riboflavin kinase (214 aa).

Residues methionine 1–serine 26 form a disordered region. 2 residues coordinate Mg(2+): threonine 44 and asparagine 46. The active-site Nucleophile is glutamate 112.

It belongs to the flavokinase family. Zn(2+) serves as cofactor. Requires Mg(2+) as cofactor.

The enzyme catalyses riboflavin + ATP = FMN + ADP + H(+). It participates in cofactor biosynthesis; FMN biosynthesis; FMN from riboflavin (ATP route): step 1/1. In terms of biological role, catalyzes the phosphorylation of riboflavin (vitamin B2) to form flavin mononucleotide (FMN) coenzyme. The polypeptide is Riboflavin kinase (fmn1) (Aspergillus clavatus (strain ATCC 1007 / CBS 513.65 / DSM 816 / NCTC 3887 / NRRL 1 / QM 1276 / 107)).